Reading from the N-terminus, the 681-residue chain is Proline dehydrogenase 1, mitochondrial (681 aa).

A mitochondrion-targeting transit peptide spans 1–30; it reads MALLRSLSAQRTAISLVYGRNSSKSSNSVA. A compositionally biased stretch (polar residues) spans 76 to 87; it reads STLVQPEVVSSE. 2 disordered regions span residues 76–113 and 216–239; these read STLV…QRDP and EEAE…EGSM. A compositionally biased stretch (basic and acidic residues) spans 88-99; that stretch reads TVKRSMKQESSQ.

Belongs to the proline oxidase family. FAD is required as a cofactor. Most abundant in developing nervous system.

The protein resides in the mitochondrion matrix. The catalysed reaction is L-proline + a quinone = (S)-1-pyrroline-5-carboxylate + a quinol + H(+). It functions in the pathway amino-acid degradation; L-proline degradation into L-glutamate; L-glutamate from L-proline: step 1/2. In terms of biological role, converts proline to delta-1-pyrroline-5-carboxylate. Involved in the conversion of proline to glutamate, which functions as a transmitter at neuromuscular junctions. Glutamate deficiency could possibly account for reduced motor activity. The chain is Proline dehydrogenase 1, mitochondrial (slgA) from Drosophila melanogaster (Fruit fly).